Here is a 431-residue protein sequence, read N- to C-terminus: Glucose-1-phosphate adenylyltransferase (431 aa).

Alpha-D-glucose 1-phosphate-binding positions include tyrosine 108, glycine 174, 189–190 (EK), and serine 207.

Belongs to the bacterial/plant glucose-1-phosphate adenylyltransferase family. Homotetramer.

It carries out the reaction alpha-D-glucose 1-phosphate + ATP + H(+) = ADP-alpha-D-glucose + diphosphate. It functions in the pathway glycan biosynthesis; glycogen biosynthesis. Its function is as follows. Involved in the biosynthesis of ADP-glucose, a building block required for the elongation reactions to produce glycogen. Catalyzes the reaction between ATP and alpha-D-glucose 1-phosphate (G1P) to produce pyrophosphate and ADP-Glc. The polypeptide is Glucose-1-phosphate adenylyltransferase (Actinobacillus succinogenes (strain ATCC 55618 / DSM 22257 / CCUG 43843 / 130Z)).